The following is a 617-amino-acid chain: Manganese lipoxygenase (617 aa).

An N-terminal signal peptide occupies residues 1–17 (MRIGLLAFAVAARYVEA). Over residues 23-48 (GEEVASSSAPTTLPSTSSSSALPSPT) the composition is skewed to low complexity. The interval 23-59 (GEEVASSSAPTTLPSTSSSSALPSPTKYTLPHEDPNP) is disordered. N-linked (GlcNAc...) asparagine glycans are attached at residues N109, N119, and N160. Positions 122 to 617 (LRDIQSHGGL…PAVNPFFLSI (496 aa)) constitute a Lipoxygenase domain. Mn(2+) contacts are provided by H293, H297, H479, and N483. N-linked (GlcNAc...) asparagine glycosylation occurs at N547. A Mn(2+)-binding site is contributed by I617.

Belongs to the lipoxygenase family. Manganese lipoxygenase subfamily. Mn(2+) serves as cofactor.

It is found in the secreted. The enzyme catalyses (9Z,12Z)-octadecadienoate + O2 = (9S)-hydroperoxy-(10E,12Z)-octadecadienoate. It carries out the reaction (9Z,12Z)-octadecadienoate + O2 = (11S)-hydroperoxy-(9Z,12Z)-octadecadienoate. It catalyses the reaction (9Z,12Z)-octadecadienoate + O2 = (13R)-hydroperoxy-(9Z,11E)-octadecadienoate. The catalysed reaction is (9Z,12Z,15Z)-octadecatrienoate + O2 = (9S)-hydroperoxy-(10E,12Z,15Z)-octadecatrienoate. The enzyme catalyses (9Z,12Z,15Z)-octadecatrienoate + O2 = (11R)-hydroperoxy-(9Z,12Z,15Z)-octadecatrienoate. It carries out the reaction (9Z,12Z,15Z)-octadecatrienoate + O2 = (13R)-hydroperoxy-(9Z,11E,15Z)-octadecatrienoate. Lipoxygenase that metabolizes linoleic and alpha-linolenic acids to 9S-, 11- and 13R-hydroperoxy fatty acids. At the end of lipoxygenation, the intermediate products 11S-HPODE and 13R-HPODE from linoleic acid are then transformed into 9S-HPODE as the final product. The intermediate product 11R-HPOTrE from alpha-linolenic acid is transformed into 9S-HPOTrE and 13R-HPOTrE as the final products. 9S-HPOTrE is further oxidized by the enzyme to 9,16-DiHOTrE as the end product. Also acts on gamma-linolenic acid producing 9-HOTrE(n-6) as the main metabolite. In Nakataea oryzae (Rice stem rot fungus), this protein is Manganese lipoxygenase.